A 140-amino-acid polypeptide reads, in one-letter code: ATP synthase epsilon chain 1 (140 aa).

This sequence belongs to the ATPase epsilon chain family. As to quaternary structure, F-type ATPases have 2 components, CF(1) - the catalytic core - and CF(0) - the membrane proton channel. CF(1) has five subunits: alpha(3), beta(3), gamma(1), delta(1), epsilon(1). CF(0) has three main subunits: a, b and c.

Its subcellular location is the cell inner membrane. In terms of biological role, produces ATP from ADP in the presence of a proton gradient across the membrane. The sequence is that of ATP synthase epsilon chain 1 from Methylococcus capsulatus (strain ATCC 33009 / NCIMB 11132 / Bath).